The primary structure comprises 28 residues: Cysteine-rich venom protein asurin-2 (28 aa).

Over residues 1–15 the composition is skewed to basic and acidic residues; sequence SNKKDYRKEIVDKHN. Residues 1 to 28 are disordered; the sequence is SNKKDYRKEIVDKHNALSRSVKPTASNM. Positions 17–28 are enriched in polar residues; it reads LSRSVKPTASNM.

The protein belongs to the CRISP family. Post-translationally, contains 8 disulfide bonds. Expressed by the venom gland.

The protein resides in the secreted. Functionally, blocks contraction of smooth muscle elicited by high potassium-induced depolarization, but does not block caffeine-stimulated contraction. May target voltage-gated calcium channels on smooth muscle. The sequence is that of Cysteine-rich venom protein asurin-2 from Austrelaps superbus (Lowland copperhead snake).